The sequence spans 198 residues: Nucleoid occlusion factor SlmA (198 aa).

The HTH tetR-type domain maps to 10–70 (NRREEILQSL…SLIEFIEDSL (61 aa)). The H-T-H motif DNA-binding region spans 33 to 52 (TTAKLAASVGVSEAALYRHF). Residues 117 to 145 (EQDRLQGRINQLFERIEAQLRQVMREKKM) adopt a coiled-coil conformation.

This sequence belongs to the nucleoid occlusion factor SlmA family. As to quaternary structure, homodimer. Interacts with FtsZ.

The protein localises to the cytoplasm. It is found in the nucleoid. Its function is as follows. Required for nucleoid occlusion (NO) phenomenon, which prevents Z-ring formation and cell division over the nucleoid. Acts as a DNA-associated cell division inhibitor that binds simultaneously chromosomal DNA and FtsZ, and disrupts the assembly of FtsZ polymers. SlmA-DNA-binding sequences (SBS) are dispersed on non-Ter regions of the chromosome, preventing FtsZ polymerization at these regions. The chain is Nucleoid occlusion factor SlmA from Klebsiella pneumoniae subsp. pneumoniae (strain ATCC 700721 / MGH 78578).